The following is a 1107-amino-acid chain: Voltage-gated delayed rectifier potassium channel KCNH8 (1107 aa).

Over 1–225 (MPVMKGLLAP…HFSTFKAGWD (225 aa)) the chain is Cytoplasmic. The PAS domain maps to 18 to 90 (IATRFDGTHS…LQIEKSLEEK (73 aa)). Residues 93 to 145 (FKGEIMFYKKNGSPFWCLLDIVPIKNEKGDVVLFLASFKDITDTKVKITPEDK) form the PAC domain. Residues 226 to 246 (WLILLATFYVAVTVPYNVCFI) form a helical membrane-spanning segment. The Extracellular segment spans residues 247 to 255 (GNDDLSTTR). A helical membrane pass occupies residues 256–276 (STTVSDIAVEILFIIDIILNF). The Cytoplasmic portion of the chain corresponds to 277-298 (RTTYVSKSGQVIFEARSICIHY). The helical transmembrane segment at 299-319 (VTTWFIIDLIAALPFDLLYAF) threads the bilayer. Asparagine 320 is a glycosylation site (N-linked (GlcNAc...) asparagine). Residues 320 to 327 (NVTVVSLV) lie on the Extracellular side of the membrane. Residues 328–348 (HLLKTVRLLRLLRLLQKLDRY) traverse the membrane as a helical; Voltage-sensor segment. Residues 349-357 (SQHSTIVLT) lie on the Cytoplasmic side of the membrane. A helical membrane pass occupies residues 358–378 (LLMSMFALLAHWMACIWYVIG). Residues 379–419 (KMEREDNSLLKWEVGWLHELGKRLESPYYGNNTLGGPSIRS) lie on the Extracellular side of the membrane. N-linked (GlcNAc...) asparagine glycosylation is present at asparagine 409. The segment at residues 420–440 (AYIAALYFTLSSLTSVGFGNV) is an intramembrane region (pore-forming). The Selectivity filter motif lies at 434–439 (SVGFGN). Over 441–448 (SANTDAEK) the chain is Extracellular. Residues 449-469 (IFSICTMLIGALMHALVFGNV) traverse the membrane as a helical segment. At 470–1107 (TAIIQRMYSR…EVKDNKAINV (638 aa)) the chain is on the cytoplasmic side. The cNMP-binding domain stretch occupies residues 551–668 (LFECASRGCL…HKFVEDIQHD (118 aa)). The span at 686–702 (SNKSMVSQSEPKGNGNI) shows a compositional bias: polar residues. 4 disordered regions span residues 686–742 (SNKS…NKKV), 764–791 (HSPI…KRKE), 818–847 (EDGN…PPLG), and 961–989 (VDPS…YHSP). A compositionally biased stretch (acidic residues) spans 710–724 (VEDEEEEEEGEEEEA). Residues 961–972 (VDPSSVGSSPQR) are compositionally biased toward polar residues.

The protein belongs to the potassium channel family. H (Eag) (TC 1.A.1.20) subfamily. Kv12.1/KCNH8 sub-subfamily. As to quaternary structure, the potassium channel is probably composed of a homo- or heterotetrameric complex of pore-forming alpha subunits that can associate with modulating beta subunits. In terms of tissue distribution, primarily expressed in the nervous system.

It is found in the membrane. It carries out the reaction K(+)(in) = K(+)(out). Functionally, pore-forming (alpha) subunit of a voltage-gated delayed rectifier potassium channel that mediates outward-rectifying potassium currents. Elicits a slowly activating, non-inactivating and slowly deactivation outwards potassium current at depolarizating voltages from -30 mV to +50mV. Shows no obvious change in the activation rate from different holding potentials. Activation is strongly dependent on the pH of the external solution. This is Voltage-gated delayed rectifier potassium channel KCNH8 from Homo sapiens (Human).